We begin with the raw amino-acid sequence, 332 residues long: 2-hydroxyacid dehydrogenase homolog 2 (332 aa).

NAD(+)-binding positions include 154–155 (KI), 233–235 (TSR), and Asp259. Residue Arg235 is part of the active site. Glu264 is a catalytic residue. Residue His296 is the Proton donor of the active site. Position 296 to 299 (296 to 299 (HQAF)) interacts with NAD(+).

The protein belongs to the D-isomer specific 2-hydroxyacid dehydrogenase family.

It localises to the cytoplasm. Its subcellular location is the nucleus. This Schizosaccharomyces pombe (strain 972 / ATCC 24843) (Fission yeast) protein is 2-hydroxyacid dehydrogenase homolog 2.